The primary structure comprises 776 residues: Endonuclease MutS2 (776 aa).

330-337 serves as a coordination point for ATP; that stretch reads GPNTGGKT. Residues 701 to 776 enclose the Smr domain; sequence LDLRGMRYEE…GSGATIAILK (76 aa).

This sequence belongs to the DNA mismatch repair MutS family. MutS2 subfamily. Homodimer. Binds to stalled ribosomes, contacting rRNA.

In terms of biological role, endonuclease that is involved in the suppression of homologous recombination and thus may have a key role in the control of bacterial genetic diversity. Its function is as follows. Acts as a ribosome collision sensor, splitting the ribosome into its 2 subunits. Detects stalled/collided 70S ribosomes which it binds and splits by an ATP-hydrolysis driven conformational change. Acts upstream of the ribosome quality control system (RQC), a ribosome-associated complex that mediates the extraction of incompletely synthesized nascent chains from stalled ribosomes and their subsequent degradation. Probably generates substrates for RQC. The sequence is that of Endonuclease MutS2 from Lactococcus lactis subsp. lactis (strain IL1403) (Streptococcus lactis).